The following is a 63-amino-acid chain: Large ribosomal subunit protein uL29 (63 aa).

This sequence belongs to the universal ribosomal protein uL29 family.

This chain is Large ribosomal subunit protein uL29, found in Shewanella loihica (strain ATCC BAA-1088 / PV-4).